A 476-amino-acid polypeptide reads, in one-letter code: MLSIDHVDWLELIRVTLHPLAKFPGPKLAGASYCYEFWYEVICGIQYTQKIIKLHEQYGPIVRINPDELHFNDVDFVDVVYTAGARKRDKSSHYLAGFGGVSKSTFGTLDHMHHRTRRRALNKFFSKSRVLQIEDSIHEKSQQLCDKFLAYRDQGPFDLTGAFSCIATDTVTEYCFGSSPGFLNQDGWEPNCKSYFETIERMAHVTRHVPWILYLAKWLPLSIIRLVSSDLNSFLVDTRVKKPERLKRVVLDAERHDAKDCPVFLELLNSDLPPREKSKQRFMYEANGATLAGSGSTAIAMSNIVYNLVANPRIGHKLRSELLGKVSDPKNLPRWSSLEELPYLTAVIHEGLRSMYDPSKERLPYDPSQERLPRIATEEELIYKDGSTPGKSKYVIPRGYAIGTSAHVVHSDESIFPNASQFNPERWLGRDGQRNRELERHLLSFSKGSRYCLGMHCRCTTCLALPASVRNGTRGY.

Residue Cys452 participates in heme binding.

The protein belongs to the cytochrome P450 family. It depends on heme as a cofactor.

It functions in the pathway secondary metabolite biosynthesis. In terms of biological role, cytochrome P450 monooxygenase; part of the gene cluster that mediates the biosynthesis of pyrrolopyrazines, secondary metabolites showing insecticidal activity. The role of ppzE within the pathway has still to be determined. The single multifunctional NRPS ppzA is sufficient to produce peramine via condensation of 1-pyrroline-5-carboxylate and arginine, N-methylation of the alpha-amino group of arginine and reduction of the thioester and the cyclization to form an iminium ion resulting in release from the peptide synthetase. Deprotonation of this intermediate and oxidation of the pyrroline ring would give rise to peramine. In Epichloe species that produce only peramine, the peramine synthetase gene is not localized in a gene cluster, in contrast to Metarhizium species that contain additional pyrrolopyrazine biosynthesis genes. The 2-oxoglutarate-Fe(II) type oxidoreductase ppzC hydroxylates peramine to yield the newly identified compound 8-hydroxyperamine whereas ppzD converts L-proline into trans-4-hydroxy-L-proline, a precursor of peramine biosynthesis. The chain is Cytochrome P450 monooxygenase ppzE from Metarhizium majus (strain ARSEF 297).